We begin with the raw amino-acid sequence, 492 residues long: Aerolysin-3 (492 aa).

Positions 1–23 are cleaved as a signal peptide; the sequence is MKKLKITGLSLIISGLLMAQAQA. Cystine bridges form between C42-C98 and C182-C187. The interval 68 to 84 is interaction with host N-linked glycan; that stretch reads WQISGLANGWVIMGPGY. Residues 256 to 288 are part of the transmembrane beta-barrel after proteolytic activation of the toxin and insertion into the host membrane; the sequence is YGLSEKVTTKNKFKWPLVGETELSIEIAANQSW. Residues 346 to 355 form an interaction with glycans from host GPI-anchor region; that stretch reads RWGGNAWYTH. Positions 446–492 are excised as a propeptide; it reads AAASHSSRARNLSAGQGLRLEIPLDAQELSGLGFNNVSLSVTPAANQ.

The protein belongs to the aerolysin family. As to quaternary structure, homodimer in solution; homoheptamer in the host membrane. After binding to GPI-anchored proteins in target membranes and proteolytic removal of the C-terminal propeptide, the protein assembles into a heptameric pre-pore complex. A further conformation change leads to insertion into the host membrane. In terms of processing, proteolytic cleavage and subsequent release of the propeptide trigger a major conformation change, leading to the formation of a heptameric pre-pore that then inserts into the host membrane.

The protein localises to the secreted. It localises to the host cell membrane. Its function is as follows. Secreted, cytolytic toxin that forms pores in host membranes after proteolytic removal of a C-terminal propeptide, leading to destruction of the membrane permeability barrier and cell death. The pores are formed by transmembrane beta-strands and are approximately 3 nm in diameter. The protein is Aerolysin-3 (ahh3) of Aeromonas hydrophila.